The following is a 360-amino-acid chain: Photosystem II protein D1 (360 aa).

Helical transmembrane passes span 29–46 (YIGW…TATS), 118–133 (HFLL…EWEL), and 142–156 (WIFV…AASA). A chlorophyll a-binding site is contributed by histidine 118. Position 126 (tyrosine 126) interacts with pheophytin a. 2 residues coordinate [CaMn4O5] cluster: aspartate 170 and glutamate 189. The chain crosses the membrane as a helical span at residues 197–218 (FHMAGVAGVFGGSLFSAMHGSL). Histidine 198 serves as a coordination point for chlorophyll a. Residues histidine 215 and 264-265 (SF) each bind a quinone. Histidine 215 provides a ligand contact to Fe cation. Histidine 272 provides a ligand contact to Fe cation. The helical transmembrane segment at 274–288 (FLAAWPVVGIWLTAM) threads the bilayer. 4 residues coordinate [CaMn4O5] cluster: histidine 332, glutamate 333, aspartate 342, and alanine 344. Residues 345–360 (SGDVLPVALNAPAVNG) constitute a propeptide that is removed on maturation.

Belongs to the reaction center PufL/M/PsbA/D family. As to quaternary structure, PSII is composed of 1 copy each of membrane proteins PsbA, PsbB, PsbC, PsbD, PsbE, PsbF, PsbH, PsbI, PsbJ, PsbK, PsbL, PsbM, PsbT, PsbX, PsbY, PsbZ, Psb30/Ycf12, at least 3 peripheral proteins of the oxygen-evolving complex and a large number of cofactors. It forms dimeric complexes. Requires The D1/D2 heterodimer binds P680, chlorophylls that are the primary electron donor of PSII, and subsequent electron acceptors. It shares a non-heme iron and each subunit binds pheophytin, quinone, additional chlorophylls, carotenoids and lipids. D1 provides most of the ligands for the Mn4-Ca-O5 cluster of the oxygen-evolving complex (OEC). There is also a Cl(-1) ion associated with D1 and D2, which is required for oxygen evolution. The PSII complex binds additional chlorophylls, carotenoids and specific lipids. as cofactor. In terms of processing, tyr-161 forms a radical intermediate that is referred to as redox-active TyrZ, YZ or Y-Z. C-terminally processed by CTPA; processing is essential to allow assembly of the oxygen-evolving complex and thus photosynthetic growth.

It is found in the plastid. The protein resides in the chloroplast thylakoid membrane. The catalysed reaction is 2 a plastoquinone + 4 hnu + 2 H2O = 2 a plastoquinol + O2. Its function is as follows. Photosystem II (PSII) is a light-driven water:plastoquinone oxidoreductase that uses light energy to abstract electrons from H(2)O, generating O(2) and a proton gradient subsequently used for ATP formation. It consists of a core antenna complex that captures photons, and an electron transfer chain that converts photonic excitation into a charge separation. The D1/D2 (PsbA/PsbD) reaction center heterodimer binds P680, the primary electron donor of PSII as well as several subsequent electron acceptors. This chain is Photosystem II protein D1, found in Trieres chinensis (Marine centric diatom).